The primary structure comprises 245 residues: OCIA domain-containing protein 1 (245 aa).

An OCIA domain is found at Met-1–Glu-112. Phosphoserine occurs at positions 108, 116, 123, and 191. Disordered stretches follow at residues Gly-111–Gln-141 and Asn-169–Glu-245. Basic and acidic residues-rich tracts occupy residues Glu-190 to Tyr-210 and Pro-224 to Lys-238.

Belongs to the OCIAD1 family. In terms of assembly, interacts with OCIAD2. Interacts with STAT3. In terms of tissue distribution, isoform 1 is highly expressed in many tissues, including testis, brain, placenta, ovary, prostate and mammary gland. Isoform 2 expression is restricted to the central nervous system including brain, cerebellum and spinal cord.

The protein localises to the endosome. Its function is as follows. Maintains stem cell potency. Increases STAT3 phosphorylation and controls ERK phosphorylation. May act as a scaffold, increasing STAT3 recruitment onto endosomes. Involved in integrin-mediated cancer cell adhesion and colony formation in ovarian cancer. The chain is OCIA domain-containing protein 1 from Homo sapiens (Human).